Reading from the N-terminus, the 606-residue chain is Vitamin B12 transporter BtuB (606 aa).

A signal peptide spans 1-22 (MQKSLLAIAMASLLTPVSYLHA). The short motif at 29 to 36 (DTVVVTAN) is the TonB box element. A TBDR plug domain is found at 41–153 (PLAEVIASTT…IAGVINVITT (113 aa)). Positions 158 to 606 (SEGSVVSLGA…RYFANLTYQF (449 aa)) constitute a TBDR beta-barrel domain. The TonB C-terminal box signature appears at 589–606 (LSYNAPERRYFANLTYQF).

This sequence belongs to the TonB-dependent receptor family. BtuB (TC 1.B.14.3.1) subfamily.

It is found in the cell outer membrane. Involved in the active translocation of vitamin B12 (cyanocobalamin) across the outer membrane to the periplasmic space. It derives its energy for transport by interacting with the trans-periplasmic membrane protein TonB. The sequence is that of Vitamin B12 transporter BtuB from Vibrio vulnificus (strain CMCP6).